A 379-amino-acid polypeptide reads, in one-letter code: NuA4 complex subunit EAF3 homolog (379 aa).

Residues 6 to 61 (EENEKVLVHHQNRIYEAKIIKVDPKTSKSDKKKPLYFIHYLGWKEKWNEWIEPNKI) enclose the Tudor-knot domain. Residues 75-212 (TNIKASTTSL…KRNDSKSSHF (138 aa)) are disordered. Residues 78–87 (KASTTSLNNK) show a composition bias toward low complexity. The segment covering 111-141 (ENSDEDENESELEDGGGEDADEGGEDIEDQE) has biased composition (acidic residues). Residues 165–199 (SSSSSSSSKSNNNNNNNNNNNNNNNNNNNNNNNNN) are compositionally biased toward low complexity. In terms of domain architecture, MRG spans 214–377 (STKFIDIEIP…ASSPYLKAAS (164 aa)).

Component of the NuA4 histone acetyltransferase complex.

It localises to the nucleus. Component of the NuA4 histone acetyltransferase complex which is involved in transcriptional activation of selected genes principally by acetylation of nucleosomal histone H4 and H2A. The NuA4 complex is also involved in DNA repair. Also a component of a complex which acts to repress transcription by deacetylation of nucleosomal histones. The sequence is that of NuA4 complex subunit EAF3 homolog from Dictyostelium discoideum (Social amoeba).